The following is a 293-amino-acid chain: GTP cyclohydrolase FolE2 (293 aa).

This sequence belongs to the GTP cyclohydrolase IV family.

The catalysed reaction is GTP + H2O = 7,8-dihydroneopterin 3'-triphosphate + formate + H(+). It participates in cofactor biosynthesis; 7,8-dihydroneopterin triphosphate biosynthesis; 7,8-dihydroneopterin triphosphate from GTP: step 1/1. Functionally, converts GTP to 7,8-dihydroneopterin triphosphate. This Pseudomonas entomophila (strain L48) protein is GTP cyclohydrolase FolE2.